Consider the following 248-residue polypeptide: MSLVVLKLGGSVVTDKDEPETVDEAGLAAAADAVAPLAESRRVVVVHGGGSFGHHHAAEHGVSSESGSHDARGVRAIHDAMKRLNDAVLDALEERGVAALPVHPLSAGAREADGSLSLPLAATETMLDEGFVPVLHGDVISHAGKGATIVSGDDLVVSLASGLGADRVGLCSTVPGVLDADGDVIPEITAFADAADALGGSDSTDVTGGMAAKVRKLLALGAPAHVFGPEGLSAFVAGESPGTVIRGE.

Lys-7 to Ser-11 lines the ATP pocket. Gly-49 lines the substrate pocket. Gly-50 serves as a coordination point for ATP. 2 residues coordinate substrate: His-54 and Gly-152. ATP is bound by residues Gly-209 and Lys-213.

Belongs to the isopentenyl phosphate kinase family. As to quaternary structure, homodimer.

The enzyme catalyses isopentenyl phosphate + ATP = isopentenyl diphosphate + ADP. Functionally, catalyzes the phosphorylation of isopentenyl phosphate (IP) to isopentenyl diphosphate (IPP). Functions in an alternate mevalonate (MVA) pathway leading to IPP, a key precursor for the biosynthesis of isoprenoid compounds such as archaeal membrane lipids. The chain is Isopentenyl phosphate kinase from Haloferax volcanii (strain ATCC 29605 / DSM 3757 / JCM 8879 / NBRC 14742 / NCIMB 2012 / VKM B-1768 / DS2) (Halobacterium volcanii).